Consider the following 325-residue polypeptide: Xylosidase/arabinosidase (325 aa).

The active-site Proton acceptor is Asp16. Residue Glu224 is the Proton donor of the active site.

It belongs to the glycosyl hydrolase 43 family.

It catalyses the reaction Hydrolysis of (1-&gt;4)-beta-D-xylans, to remove successive D-xylose residues from the non-reducing termini.. It carries out the reaction Hydrolysis of terminal non-reducing alpha-L-arabinofuranoside residues in alpha-L-arabinosides.. The protein is Xylosidase/arabinosidase (xsa) of Bacteroides ovatus.